The chain runs to 249 residues: Quinate/shikimate dehydrogenase (249 aa).

Lys32 and Asp68 together coordinate substrate. NAD(+) is bound by residues 93-96 (AGGA), 116-119 (NRRD), Lys166, 193-196 (CVYN), and Gly216.

Belongs to the shikimate dehydrogenase family. In terms of assembly, homodimer.

The catalysed reaction is L-quinate + NAD(+) = 3-dehydroquinate + NADH + H(+). The enzyme catalyses L-quinate + NADP(+) = 3-dehydroquinate + NADPH + H(+). It carries out the reaction shikimate + NADP(+) = 3-dehydroshikimate + NADPH + H(+). It catalyses the reaction shikimate + NAD(+) = 3-dehydroshikimate + NADH + H(+). Its pathway is metabolic intermediate biosynthesis; chorismate biosynthesis; chorismate from D-erythrose 4-phosphate and phosphoenolpyruvate: step 4/7. The actual biological function of YdiB remains unclear, nor is it known whether 3-dehydroshikimate or quinate represents the natural substrate. Catalyzes the reversible NAD-dependent reduction of both 3-dehydroshikimate (DHSA) and 3-dehydroquinate to yield shikimate (SA) and quinate, respectively. It can use both NAD or NADP for catalysis, however it has higher catalytic efficiency with NAD. The protein is Quinate/shikimate dehydrogenase of Shigella flexneri serotype 5b (strain 8401).